Consider the following 351-residue polypeptide: Homeobox-leucine zipper protein HOX23 (351 aa).

The disordered stretch occupies residues 34–128 (LQDHAHGGHG…SFESGNKLEP (95 aa)). The segment covering 56–65 (SPFLPDLAMD) has biased composition (low complexity). Residues 101–160 (GGEKKRRLSVEQVRTLERSFESGNKLEPERKAQLARALGLQPRQVAIWFQNRRARWKTKQ) constitute a DNA-binding region (homeobox). Over residues 114–128 (RTLERSFESGNKLEP) the composition is skewed to basic and acidic residues. The leucine-zipper stretch occupies residues 159-203 (KQLEKDFDALRRQLDAARAENDALLSLNSKLHAEIVALKGGAAAA). The segment at 227–263 (EASCSNRSENSSEINLDISRPAPPPPPPPANESPVNR) is disordered. The segment covering 228–240 (ASCSNRSENSSEI) has biased composition (polar residues). Residues 247–257 (PAPPPPPPPAN) show a composition bias toward pro residues.

The protein belongs to the HD-ZIP homeobox family. Class I subfamily. As to expression, expressed in seedlings, roots, stems, leaf sheaths and panicles.

Its subcellular location is the nucleus. Its function is as follows. Probable transcription factor. This chain is Homeobox-leucine zipper protein HOX23 (HOX23), found in Oryza sativa subsp. indica (Rice).